A 146-amino-acid chain; its full sequence is Hydroxyproline-rich systemin (146 aa).

A signal peptide spans 1 to 24; it reads MISFFRAFFLIIIISFLIFVGAQA. A propeptide spanning residues 25–48 is cleaved from the precursor; it reads RTLLGNYHDDEMLIELKLESGNYG. The segment at 47-128 is disordered; the sequence is YGRTPYKTPP…PPPPKPQDEQ (82 aa). Residues Pro-51, Pro-55, Pro-56, Pro-57, Pro-58, and Pro-63 each carry the 4-hydroxyproline modification. 6 O-linked (Ara...) hydroxyproline glycosylation sites follow: Pro-51, Pro-55, Pro-56, Pro-57, Pro-58, and Pro-63. Positions 67 to 70 are excised as a propeptide; it reads EIVN. 3 positions are modified to 4-hydroxyproline: Pro-79, Pro-80, and Pro-82. Residues Pro-79, Pro-80, and Pro-82 are each glycosylated (O-linked (Ara...) hydroxyproline). Positions 86–110 are excised as a propeptide; the sequence is PIIGQLTTITTTPHHDDTVAAPPVG. A 4-hydroxyproline mark is found at Pro-119, Pro-120, Pro-121, and Pro-122. O-linked (Ara...) hydroxyproline glycans are attached at residues Pro-119, Pro-120, Pro-121, and Pro-122. A propeptide spanning residues 131–146 is cleaved from the precursor; it reads IIITSSSSTLPLQASY.

O-glycosylated; contains pentose side chains. As to expression, leaves.

It localises to the secreted. Activates a lipid-based signal transduction pathway in which linolenic acid is converted to jasmonic acid, a potent activator of defense gene transcription. Induces synthesis of proteinase inhibitors I and II in leaves when supplied through cut stems. The protein is Hydroxyproline-rich systemin of Solanum lycopersicum (Tomato).